We begin with the raw amino-acid sequence, 60 residues long: Large ribosomal subunit protein bL32 (60 aa).

Positions 1-60 (MAVQQNKKSRSARDMRRSHDALEPNALSVEKSTGEVHLRHHVSPDGFYRGRKVIDKGADE) are disordered. Basic and acidic residues predominate over residues 11 to 22 (SARDMRRSHDAL).

It belongs to the bacterial ribosomal protein bL32 family.

This Stutzerimonas stutzeri (strain A1501) (Pseudomonas stutzeri) protein is Large ribosomal subunit protein bL32.